We begin with the raw amino-acid sequence, 195 residues long: Probable GTP-binding protein EngB (195 aa).

The EngB-type G domain maps to 22 to 195 (GRPEVALAGR…WAALLPFLTE (174 aa)). GTP contacts are provided by residues 30–37 (GRSNVGKS), 57–61 (GKTQT), 75–78 (DVPG), 142–145 (TKAD), and 174–176 (FSS). Positions 37 and 59 each coordinate Mg(2+).

This sequence belongs to the TRAFAC class TrmE-Era-EngA-EngB-Septin-like GTPase superfamily. EngB GTPase family. Mg(2+) serves as cofactor.

In terms of biological role, necessary for normal cell division and for the maintenance of normal septation. The polypeptide is Probable GTP-binding protein EngB (Geobacillus thermodenitrificans (strain NG80-2)).